Reading from the N-terminus, the 365-residue chain is Phosphatidylcholine:ceramide cholinephosphotransferase 2 (365 aa).

Basic and acidic residues predominate over residues 1 to 14; that stretch reads MDIIETAKLEEHLE. A disordered region spans residues 1 to 52; the sequence is MDIIETAKLEEHLENQPSDPTNTYARPAEPVEEENKNGNGKPKSLSSGLRKG. The segment covering 15-24 has biased composition (polar residues); sequence NQPSDPTNTY. A run of 4 helical transmembrane segments spans residues 80-100, 128-148, 159-179, and 206-226; these read GIAFIYAVFNLVLTTVMITVV, FSVSEINGIILVGLWITQWLF, FCFIIGTLYLYRCITMYVTTL, and LISGGGLSITGSHILCGDFLF. The active site involves H229. The chain crosses the membrane as a helical span at residues 248–268; the sequence is FWWYHLICWLLSAAGIICILV. Residues H272 and D276 contribute to the active site. A helical membrane pass occupies residues 275–295; that stretch reads IDVIIAYYITTRLFWWYHSMA. Residues 296 to 365 are Cytoplasmic-facing; that stretch reads NEKNLKVSSQ…KIGEDNEKST (70 aa). S-palmitoyl cysteine attachment occurs at residues C331, C332, C343, and C348.

The protein belongs to the sphingomyelin synthase family. Palmitoylated on Cys-331, Cys-332, Cys-343 and Cys-348; which plays an important role in plasma membrane localization. In terms of tissue distribution, brain, heart, kidney, liver, muscle and stomach. Also expressed in a number of cell lines such as carcinoma HeLa cells, hepatoma Hep-G2 cells, and colon carcinoma Caco-2 cells.

The protein localises to the cell membrane. It localises to the golgi apparatus membrane. It carries out the reaction an N-acylsphing-4-enine + a 1,2-diacyl-sn-glycero-3-phosphocholine = a sphingomyelin + a 1,2-diacyl-sn-glycerol. It catalyses the reaction an N-acylsphinganine + a 1,2-diacyl-sn-glycero-3-phosphocholine = an N-acylsphinganine-1-phosphocholine + a 1,2-diacyl-sn-glycerol. The catalysed reaction is an N-acyl-(4R)-4-hydroxysphinganine + a 1,2-diacyl-sn-glycero-3-phosphocholine = an N-acyl-(4R)-4-hydroxysphinganine-phosphocholine + a 1,2-diacyl-sn-glycerol. The enzyme catalyses an N-acylsphinganine + a 1,2-diacyl-sn-glycero-3-phosphoethanolamine = an N-acylsphinganine-1-phosphoethanolamine + a 1,2-diacyl-sn-glycerol. It carries out the reaction an N-acyl-(4R)-4-hydroxysphinganine + a 1,2-diacyl-sn-glycero-3-phosphoethanolamine = an N-acyl-(4R)-4-hydroxysphinganine-1-phosphoethanolamine + a 1,2-diacyl-sn-glycerol. It catalyses the reaction an N-acylsphing-4-enine + a 1,2-diacyl-sn-glycero-3-phosphoethanolamine = an N-acylsphing-4-enine 1-phosphoethanolamine + a 1,2-diacyl-sn-glycerol. The catalysed reaction is 1,2-dihexadecanoyl-sn-glycero-3-phosphocholine + an N-acylsphing-4-enine = 1,2-dihexadecanoyl-sn-glycerol + a sphingomyelin. The enzyme catalyses 1-(9Z-octadecenoyl)-2-acyl-sn-3-glycerol + a sphingomyelin = a 1-(9Z-octadecenoyl)-2-acyl-sn-glycero-3-phosphocholine + an N-acylsphing-4-enine. It carries out the reaction N-hexadecanoylsphinganine + a 1,2-diacyl-sn-glycero-3-phosphocholine = N-hexadecanoyl-sphinganine-1-phosphocholine + a 1,2-diacyl-sn-glycerol. It catalyses the reaction N-hexadecanoyl-(4R)-hydroxysphinganine + a 1,2-diacyl-sn-glycero-3-phosphocholine = N-hexadecanoyl-(4R)-hydroxysphinganine-phosphocholine + a 1,2-diacyl-sn-glycerol. The catalysed reaction is N-hexadecanoylsphinganine + a 1,2-diacyl-sn-glycero-3-phosphoethanolamine = N-hexadecanoyl-sphinganine-1-phosphoethanolamine + a 1,2-diacyl-sn-glycerol. The enzyme catalyses N-hexadecanoyl-(4R)-hydroxysphinganine + a 1,2-diacyl-sn-glycero-3-phosphoethanolamine = N-hexadecanoyl-(4R)-hydroxysphinganine-1-phosphoethanolamine + a 1,2-diacyl-sn-glycerol. It functions in the pathway sphingolipid metabolism. Inhibited by bacterial PC-phospholipase C inhibitor D609. Its function is as follows. Sphingomyelin synthase that primarily contributes to sphingomyelin synthesis and homeostasis at the plasma membrane. Catalyzes the reversible transfer of phosphocholine moiety in sphingomyelin biosynthesis: in the forward reaction transfers phosphocholine head group of phosphatidylcholine (PC) on to ceramide (CER) to form ceramide phosphocholine (sphingomyelin, SM) and diacylglycerol (DAG) as by-product, and in the reverse reaction transfers phosphocholine from SM to DAG to form PC and CER. The direction of the reaction appears to depend on the levels of CER and DAG in the plasma membrane. Does not use free phosphorylcholine or CDP-choline as donors. Can also transfer phosphoethanolamine head group of phosphatidylethanolamine (PE) on to ceramide (CER) to form ceramide phosphoethanolamine (CPE). Regulates receptor-mediated signal transduction via mitogenic DAG and proapoptotic CER, as well as via SM, a structural component of membrane rafts that serve as platforms for signal transduction and protein sorting. To a lesser extent, plays a role in secretory transport via regulation of DAG pool at the Golgi apparatus and its downstream effects on PRKD1. Required for normal bone matrix mineralization. The protein is Phosphatidylcholine:ceramide cholinephosphotransferase 2 of Homo sapiens (Human).